The primary structure comprises 271 residues: Coiled-coil domain-containing protein ORF29 (271 aa).

The disordered stretch occupies residues methionine 1 to serine 39. The span at isoleucine 20–aspartate 37 shows a compositional bias: basic and acidic residues. The stretch at arginine 208–glutamate 228 forms a coiled coil.

The protein is Coiled-coil domain-containing protein ORF29 of Helicobacter pylori (strain 35A).